The sequence spans 576 residues: 3-hydroxy-3-methylglutaryl coenzyme A reductase 1 (576 aa).

A disordered region spans residues 1–35; it reads MDSRRRPSKPLLTSSGEVLHRKQASPVTDEDQIHR. Transmembrane regions (helical) follow at residues 42–62 and 89–109; these read ALPLPLYLTNAVFFTLFFSVA and AIVSLIASFIYLLGFFGIDFV. E255 functions as the Charge relay system in the catalytic mechanism. N-linked (GlcNAc...) asparagine glycosylation occurs at N319. Active-site charge relay system residues include K387 and D463. Residues 532–552 form a helical membrane-spanning segment; it reads LLATIVAGSVLAGELSLMSAI. The Proton donor role is filled by H561. The N-linked (GlcNAc...) asparagine glycan is linked to N565.

Belongs to the HMG-CoA reductase family. Expressed in trichomes, leaves, flowers, roots and stems.

It is found in the endoplasmic reticulum membrane. The protein resides in the plastid. It localises to the chloroplast membrane. Its subcellular location is the peroxisome membrane. It carries out the reaction (R)-mevalonate + 2 NADP(+) + CoA = (3S)-3-hydroxy-3-methylglutaryl-CoA + 2 NADPH + 2 H(+). The protein operates within metabolic intermediate biosynthesis; (R)-mevalonate biosynthesis; (R)-mevalonate from acetyl-CoA: step 3/3. Catalyzes the synthesis of mevalonate, the specific precursor of all isoprenoid compounds present in plants. Component of the triterpene saponins (e.g. ginsenosides or panaxosides) and phytosterols biosynthetic pathways. Promotes triterpenes accumulation in roots. The polypeptide is 3-hydroxy-3-methylglutaryl coenzyme A reductase 1 (Cannabis sativa (Hemp)).